Here is a 502-residue protein sequence, read N- to C-terminus: Zinc finger protein 3 homolog (502 aa).

Basic and acidic residues-rich tracts occupy residues 1–13 (MGTE…PKEE) and 80–93 (PSSE…ESER). 2 disordered regions span residues 1–26 (MGTE…SLLE) and 47–103 (LEGH…NLVT). Residues Lys6 and Lys11 each participate in a glycyl lysine isopeptide (Lys-Gly) (interchain with G-Cter in SUMO2) cross-link. C2H2-type zinc fingers lie at residues 141 to 163 (HTCK…MRVH), 169 to 191 (FECK…LRIH), 197 to 219 (FACN…HRIH), 225 to 247 (YKCE…QRIH), 253 to 275 (YECN…QRIH), 281 to 303 (HECN…QKIH), 309 to 331 (YLCN…QRIH), 337 to 359 (YECN…IRIH), 365 to 387 (YVCK…ERIH), 393 to 415 (YECF…QRIH), 421 to 443 (HQCN…QKIH), 449 to 471 (YECS…QRIH), and 477 to 499 (YECQ…QSVH).

The protein belongs to the krueppel C2H2-type zinc-finger protein family.

It localises to the nucleus. Its function is as follows. May be involved in transcriptional regulation. The polypeptide is Zinc finger protein 3 homolog (ZFP3) (Homo sapiens (Human)).